The following is a 554-amino-acid chain: CTP synthase (554 aa).

Residues 1–270 (MTKFVFVTGG…DRIICEELRI (270 aa)) are amidoligase domain. Position 13 (S13) interacts with CTP. UTP is bound at residue S13. ATP-binding positions include 14–19 (SLGKGI) and D71. The Mg(2+) site is built by D71 and E144. Residues 151-153 (DIE), 191-196 (KTKPTQ), and K227 each bind CTP. UTP contacts are provided by residues 191–196 (KTKPTQ) and K227. The Glutamine amidotransferase type-1 domain maps to 295–547 (TIGMVGKYVD…VEAALAHRQR (253 aa)). G356 serves as a coordination point for L-glutamine. The Nucleophile; for glutamine hydrolysis role is filled by C383. Residues 384-387 (LGMQ), E407, and R473 each bind L-glutamine. Residues H520 and E522 contribute to the active site.

The protein belongs to the CTP synthase family. Homotetramer.

The enzyme catalyses UTP + L-glutamine + ATP + H2O = CTP + L-glutamate + ADP + phosphate + 2 H(+). The catalysed reaction is L-glutamine + H2O = L-glutamate + NH4(+). It catalyses the reaction UTP + NH4(+) + ATP = CTP + ADP + phosphate + 2 H(+). The protein operates within pyrimidine metabolism; CTP biosynthesis via de novo pathway; CTP from UDP: step 2/2. Its activity is regulated as follows. Allosterically activated by GTP, when glutamine is the substrate; GTP has no effect on the reaction when ammonia is the substrate. The allosteric effector GTP functions by stabilizing the protein conformation that binds the tetrahedral intermediate(s) formed during glutamine hydrolysis. Inhibited by the product CTP, via allosteric rather than competitive inhibition. Catalyzes the ATP-dependent amination of UTP to CTP with either L-glutamine or ammonia as the source of nitrogen. Regulates intracellular CTP levels through interactions with the four ribonucleotide triphosphates. This Ralstonia nicotianae (strain ATCC BAA-1114 / GMI1000) (Ralstonia solanacearum) protein is CTP synthase.